The primary structure comprises 179 residues: Large ribosomal subunit protein uL5 (179 aa).

The protein belongs to the universal ribosomal protein uL5 family. As to quaternary structure, part of the 50S ribosomal subunit; part of the 5S rRNA/L5/L18/L25 subcomplex. Contacts the 5S rRNA and the P site tRNA. Forms a bridge to the 30S subunit in the 70S ribosome.

Its function is as follows. This is one of the proteins that bind and probably mediate the attachment of the 5S RNA into the large ribosomal subunit, where it forms part of the central protuberance. In the 70S ribosome it contacts protein S13 of the 30S subunit (bridge B1b), connecting the 2 subunits; this bridge is implicated in subunit movement. Contacts the P site tRNA; the 5S rRNA and some of its associated proteins might help stabilize positioning of ribosome-bound tRNAs. In Xylella fastidiosa (strain 9a5c), this protein is Large ribosomal subunit protein uL5.